The sequence spans 586 residues: Alpha-1,2-mannosyltransferase MNN5 (586 aa).

The signal sequence occupies residues 1–29 (MLIRLKKRKILQVIVSAVVLILFFCSVHN). N-linked (GlcNAc...) asparagine glycans are attached at residues Asn113, Asn136, Asn259, and Asn264.

Belongs to the MNN1/MNT family. Post-translationally, glycosylated.

Its subcellular location is the golgi apparatus. It localises to the cis-Golgi network. Its pathway is protein modification; protein glycosylation. Its function is as follows. Responsible for addition of first and second mannose residues to the outer chain of core N-linked polysaccharides and to O-linked mannotriose. Implicated in late Golgi modifications. This Saccharomyces cerevisiae (strain YJM789) (Baker's yeast) protein is Alpha-1,2-mannosyltransferase MNN5 (MNN5).